A 384-amino-acid polypeptide reads, in one-letter code: Galactokinase (384 aa).

Residue 34 to 37 (EHTD) coordinates substrate. 123–129 (SSGLSSS) serves as a coordination point for ATP. Mg(2+) contacts are provided by serine 129 and glutamate 161. Residue aspartate 173 is the Proton acceptor of the active site. Tyrosine 222 serves as a coordination point for substrate.

This sequence belongs to the GHMP kinase family. GalK subfamily.

It localises to the cytoplasm. The catalysed reaction is alpha-D-galactose + ATP = alpha-D-galactose 1-phosphate + ADP + H(+). It participates in carbohydrate metabolism; galactose metabolism. Catalyzes the transfer of the gamma-phosphate of ATP to D-galactose to form alpha-D-galactose-1-phosphate (Gal-1-P). The chain is Galactokinase from Actinobacillus pleuropneumoniae serotype 3 (strain JL03).